The chain runs to 99 residues: Protein SPIRAL1-like 5 (99 aa).

The segment covering 1–12 has biased composition (gly residues); sequence MSRGGSFGGGQS. The segment at 1–99 is disordered; the sequence is MSRGGSFGGG…SSLGYLFGDK (99 aa). Over residues 27–39 the composition is skewed to pro residues; the sequence is TPAPPVAPKPAPP. The span at 56 to 73 shows a compositional bias: polar residues; the sequence is KISNNNYQRVQGQNSGNF. At S58 the chain carries Phosphoserine.

Belongs to the SPIRAL1 family. Expressed exclusively in stems and flowers.

Its function is as follows. Acts redundantly with SPR1 in maintaining the cortical microtubules organization essential for anisotropic cell growth. The chain is Protein SPIRAL1-like 5 (SP1L5) from Arabidopsis thaliana (Mouse-ear cress).